Here is a 178-residue protein sequence, read N- to C-terminus: Ribose 1,5-bisphosphate phosphokinase PhnN (178 aa).

ATP is bound at residue 9–16; the sequence is GPSGSGKD.

The protein belongs to the ribose 1,5-bisphosphokinase family.

It catalyses the reaction alpha-D-ribose 1,5-bisphosphate + ATP = 5-phospho-alpha-D-ribose 1-diphosphate + ADP. It participates in metabolic intermediate biosynthesis; 5-phospho-alpha-D-ribose 1-diphosphate biosynthesis; 5-phospho-alpha-D-ribose 1-diphosphate from D-ribose 5-phosphate (route II): step 3/3. Functionally, catalyzes the phosphorylation of ribose 1,5-bisphosphate to 5-phospho-D-ribosyl alpha-1-diphosphate (PRPP). The polypeptide is Ribose 1,5-bisphosphate phosphokinase PhnN (Pantoea vagans (strain C9-1) (Pantoea agglomerans (strain C9-1))).